A 330-amino-acid chain; its full sequence is ADP-L-glycero-D-manno-heptose-6-epimerase (330 aa).

NADP(+)-binding positions include 11-12 (FI), 32-33 (DD), Gln39, Gln54, 75-79 (QGACA), and Asn92. Catalysis depends on Tyr139, which acts as the Proton acceptor. Lys143 contacts NADP(+). A substrate-binding site is contributed by Asn168. Positions 169 and 177 each coordinate NADP(+). Residue Lys177 is the Proton acceptor of the active site. Substrate is bound by residues Arg179, His186, 200 to 203 (FGEH), Arg213, and Tyr292.

This sequence belongs to the NAD(P)-dependent epimerase/dehydratase family. HldD subfamily. As to quaternary structure, homopentamer. NADP(+) is required as a cofactor.

It carries out the reaction ADP-D-glycero-beta-D-manno-heptose = ADP-L-glycero-beta-D-manno-heptose. It functions in the pathway nucleotide-sugar biosynthesis; ADP-L-glycero-beta-D-manno-heptose biosynthesis; ADP-L-glycero-beta-D-manno-heptose from D-glycero-beta-D-manno-heptose 7-phosphate: step 4/4. Its pathway is bacterial outer membrane biogenesis; LPS core biosynthesis. Catalyzes the interconversion between ADP-D-glycero-beta-D-manno-heptose and ADP-L-glycero-beta-D-manno-heptose via an epimerization at carbon 6 of the heptose. The protein is ADP-L-glycero-D-manno-heptose-6-epimerase of Pseudomonas aeruginosa (strain ATCC 15692 / DSM 22644 / CIP 104116 / JCM 14847 / LMG 12228 / 1C / PRS 101 / PAO1).